The following is a 487-amino-acid chain: UDP-N-acetylmuramoyl-L-alanyl-D-glutamate--2,6-diaminopimelate ligase (487 aa).

Residues Leu23 and Ser25 each contribute to the UDP-N-acetyl-alpha-D-muramoyl-L-alanyl-D-glutamate site. Residue 108–114 (GTNGKTS) coordinates ATP. Residues 150-151 (TT), Ser177, Gln183, and Arg185 contribute to the UDP-N-acetyl-alpha-D-muramoyl-L-alanyl-D-glutamate site. Lys217 is subject to N6-carboxylysine. Meso-2,6-diaminopimelate-binding positions include Arg378, 402–405 (DNPR), Gly453, and Glu457. A Meso-diaminopimelate recognition motif motif is present at residues 402–405 (DNPR).

Belongs to the MurCDEF family. MurE subfamily. It depends on Mg(2+) as a cofactor. Post-translationally, carboxylation is probably crucial for Mg(2+) binding and, consequently, for the gamma-phosphate positioning of ATP.

Its subcellular location is the cytoplasm. It carries out the reaction UDP-N-acetyl-alpha-D-muramoyl-L-alanyl-D-glutamate + meso-2,6-diaminopimelate + ATP = UDP-N-acetyl-alpha-D-muramoyl-L-alanyl-gamma-D-glutamyl-meso-2,6-diaminopimelate + ADP + phosphate + H(+). It functions in the pathway cell wall biogenesis; peptidoglycan biosynthesis. Catalyzes the addition of meso-diaminopimelic acid to the nucleotide precursor UDP-N-acetylmuramoyl-L-alanyl-D-glutamate (UMAG) in the biosynthesis of bacterial cell-wall peptidoglycan. This chain is UDP-N-acetylmuramoyl-L-alanyl-D-glutamate--2,6-diaminopimelate ligase, found in Ectopseudomonas mendocina (strain ymp) (Pseudomonas mendocina).